We begin with the raw amino-acid sequence, 766 residues long: 1,4-alpha-glucan branching enzyme GlgB (766 aa).

Aspartate 431 serves as the catalytic Nucleophile. Glutamate 484 serves as the catalytic Proton donor.

The protein belongs to the glycosyl hydrolase 13 family. GlgB subfamily. As to quaternary structure, monomer.

It carries out the reaction Transfers a segment of a (1-&gt;4)-alpha-D-glucan chain to a primary hydroxy group in a similar glucan chain.. It participates in glycan biosynthesis; glycogen biosynthesis. Its function is as follows. Catalyzes the formation of the alpha-1,6-glucosidic linkages in glycogen by scission of a 1,4-alpha-linked oligosaccharide from growing alpha-1,4-glucan chains and the subsequent attachment of the oligosaccharide to the alpha-1,6 position. In Thermosynechococcus vestitus (strain NIES-2133 / IAM M-273 / BP-1), this protein is 1,4-alpha-glucan branching enzyme GlgB.